Here is a 239-residue protein sequence, read N- to C-terminus: RNA chaperone ProQ (239 aa).

Positions 107 to 177 (KARVQAQRAE…RKPVAKPVQA (71 aa)) are disordered. Basic and acidic residues predominate over residues 115–137 (AEQRAKKREAENVAAGEKNERPT).

It belongs to the ProQ family.

It is found in the cytoplasm. In terms of biological role, RNA chaperone with significant RNA binding, RNA strand exchange and RNA duplexing activities. May regulate ProP activity through an RNA-based, post-transcriptional mechanism. The protein is RNA chaperone ProQ of Photorhabdus laumondii subsp. laumondii (strain DSM 15139 / CIP 105565 / TT01) (Photorhabdus luminescens subsp. laumondii).